The primary structure comprises 301 residues: Vomeronasal type-1 receptor 4 (301 aa).

Over 1–5 the chain is Extracellular; the sequence is MASRY. The helical transmembrane segment at 6-26 threads the bilayer; that stretch reads VAVGMILSQTVVGVLGSFSVL. The Cytoplasmic segment spans residues 27-48; it reads LHYLSFYCTGCRLRSTDLIVKH. The chain crosses the membrane as a helical span at residues 49–69; sequence LIVANFLALRCKGVPQTMAAF. The Extracellular portion of the chain corresponds to 70 to 88; it reads GVRYFLNALGCKLVFYLHR. A helical transmembrane segment spans residues 89 to 109; the sequence is VGRGVSIGTTCLLSVFQVITV. The Cytoplasmic segment spans residues 110–126; that stretch reads SSRKSRWAKLKEKAPKH. Residues 127–147 traverse the membrane as a helical segment; the sequence is VGFSVLLCWIVCMLVNIIFPM. At 148 to 185 the chain is on the extracellular side; that stretch reads YVTGKWNYTNITVNEDLGYCSGGGNNKIAQTLRAMLLS. N-linked (GlcNAc...) asparagine glycans are attached at residues asparagine 154 and asparagine 157. The helical transmembrane segment at 186-206 threads the bilayer; that stretch reads FPDVLCLGLMLWVSSSMVCIL. Topologically, residues 207 to 234 are cytoplasmic; sequence HRHKQRVQHIDRSNLSPRASPENRATQS. A helical transmembrane segment spans residues 235–255; the sequence is ILILVSTFVSSYTLSCLFQVC. Topologically, residues 256 to 264 are extracellular; that stretch reads MALLDNPNS. Residues 265-285 traverse the membrane as a helical segment; the sequence is LLVNTSALMSVCFPTLSPFVL. The Cytoplasmic portion of the chain corresponds to 286-301; it reads MSCDPSVYRFCFAWKR.

The protein belongs to the G-protein coupled receptor 1 family.

It localises to the cell membrane. Its function is as follows. Putative pheromone receptor. This is Vomeronasal type-1 receptor 4 (VN1R4) from Homo sapiens (Human).